The chain runs to 90 residues: Serine protease inhibitor kazal-like protein, minor form (90 aa).

An N-terminal signal peptide occupies residues 1 to 23; that stretch reads MSSTWIKFLFILTLVLLPYSVFS. Residues 33–89 enclose the Kazal-like domain; it reads VIKEPNCTMYKSKSECSNIAENPVCADDRNTYYNECYFCIEKVVEKLKYRYHGICIY. Asparagine 38 carries an N-linked (GlcNAc...) asparagine glycan.

In terms of tissue distribution, luminal fluid and mucosal folds of the seminal vesicles (at protein level). Not detected in brain, heart, lung, liver, kidney, stomach, small intestine, muscle, skin, thymus, placenta or bladder.

Its subcellular location is the secreted. In terms of biological role, does not function as an inhibitor of trypsin, chymotrypsin, subtilisin or elastase. Binds sperm and enhances sperm motility. May act as a decapacitation factor, suppresses BSA-stimulated sperm capacitation and blocks sperm-oocyte interactions in vitro. The chain is Serine protease inhibitor kazal-like protein, minor form (Spinkl) from Mus musculus (Mouse).